We begin with the raw amino-acid sequence, 687 residues long: Glycine--tRNA ligase beta subunit (687 aa).

Belongs to the class-II aminoacyl-tRNA synthetase family. In terms of assembly, tetramer of two alpha and two beta subunits.

It is found in the cytoplasm. It carries out the reaction tRNA(Gly) + glycine + ATP = glycyl-tRNA(Gly) + AMP + diphosphate. The protein is Glycine--tRNA ligase beta subunit of Neisseria meningitidis serogroup B (strain ATCC BAA-335 / MC58).